The sequence spans 147 residues: MQPSWTPAPVQRTACNITAWGGEFGKEGEGRCEQVALSSGPPEGALHASREGPQPPGAENLRPSTGETFVQSGRWDGGWRGAMKGRRHRQASTPPTRPESIFVPTAQDGAQMVCKAHTRTTQYTEQDSVVTARGLLDAKRVGVAGGS.

The segment at 30 to 102 (GRCEQVALSS…TPPTRPESIF (73 aa)) is disordered. Residues 62–71 (RPSTGETFVQ) show a composition bias toward polar residues.

This is an uncharacterized protein from Homo sapiens (Human).